Consider the following 256-residue polypeptide: Hydroxyacylglutathione hydrolase (256 aa).

The Zn(2+) site is built by histidine 57, histidine 59, aspartate 61, histidine 62, histidine 115, aspartate 134, and histidine 172.

It belongs to the metallo-beta-lactamase superfamily. Glyoxalase II family. In terms of assembly, monomer. The cofactor is Zn(2+).

The enzyme catalyses an S-(2-hydroxyacyl)glutathione + H2O = a 2-hydroxy carboxylate + glutathione + H(+). It participates in secondary metabolite metabolism; methylglyoxal degradation; (R)-lactate from methylglyoxal: step 2/2. Functionally, thiolesterase that catalyzes the hydrolysis of S-D-lactoyl-glutathione to form glutathione and D-lactic acid. This chain is Hydroxyacylglutathione hydrolase, found in Rhodospirillum rubrum (strain ATCC 11170 / ATH 1.1.1 / DSM 467 / LMG 4362 / NCIMB 8255 / S1).